Consider the following 475-residue polypeptide: Gustatory and pheromone receptor 33a (475 aa).

Residues 1–34 lie on the Cytoplasmic side of the membrane; the sequence is MIQIMNWFSMVIGLIPLNRQQSETNFILDYAMMC. The chain crosses the membrane as a helical span at residues 35–55; that stretch reads IVPIFYVACYLLINLSHIIGL. The Extracellular portion of the chain corresponds to 56 to 68; that stretch reads CLLDSCNSVCKLS. The chain crosses the membrane as a helical span at residues 69–89; sequence SHLFMHLGAFLYLTITLLSLY. Over 90–128 the chain is Cytoplasmic; it reads RRKEFFQQFDARLNDIDAVIQKCQRVAEMDKVKVTAVKH. A helical transmembrane segment spans residues 129–149; it reads SVAYHFTWLFLFCVFTFALYY. Residues 150–158 are Extracellular-facing; that stretch reads DVRSLYLTF. The chain crosses the membrane as a helical span at residues 159-179; the sequence is GNLAFIPFMVSSFPYLAGSII. Residues 180–319 are Cytoplasmic-facing; the sequence is QGEFIYHVSV…LALSVITNGE (140 aa). Positions 243 to 281 are disordered; it reads TGFGNENKFAGEMKRQEGQQKNDDDDLDTSNDEDEDDFD. A compositionally biased stretch (basic and acidic residues) spans 251–264; it reads FAGEMKRQEGQQKN. Acidic residues predominate over residues 265–281; it reads DDDDLDTSNDEDEDDFD. A helical membrane pass occupies residues 320–340; it reads FGPQCVPYMAACFVVSIFGIF. The Extracellular portion of the chain corresponds to 341-357; that stretch reads LETKVNFIVGGKSRLLD. A helical transmembrane segment spans residues 358–378; sequence YMTYLYVIWSFTTMMVAYIVL. Over 379 to 441 the chain is Cytoplasmic; it reads RLCCNANNHS…FNGVGLFALD (63 aa). The helical transmembrane segment at 442–462 threads the bilayer; sequence YTFIFSTVSAATSYLIVLLQF. The Extracellular portion of the chain corresponds to 463 to 475; that stretch reads DMTAILRNEGLMS.

Belongs to the insect chemoreceptor superfamily. Gustatory receptor (GR) family. Gr66a subfamily. As to expression, expressed widely in gustatory receptor neurons (GRNs) that respond to aversive chemicals. In larvae, is expressed in neurons of the terminal external chemosensory organ, and the dorsal, ventral and posterior external chemosensory organs.

The protein localises to the cell membrane. In terms of biological role, gustatory receptor which mediates acceptance or avoidance behavior, depending on its substrates. Required for sensing all nonvolatile repulsive chemicals, including tastants, pheromones, and especially N,N-Diethyl-meta-toluamide (DEET), the most widely used insect repellent worldwide. Also functions as a pheromone receptor for a male inhibitory pheromone leading to male-male courtship suppression. The polypeptide is Gustatory and pheromone receptor 33a (Gr33a) (Drosophila melanogaster (Fruit fly)).